A 706-amino-acid polypeptide reads, in one-letter code: Phenylalanine--tRNA ligase beta subunit, chloroplastic (706 aa).

Residues 300–388 (KVLKPIVLNY…RLHGFNNFLT (89 aa)) form the B5 domain. Residues Asp366, Asp372, Glu375, and Glu376 each contribute to the Mg(2+) site. The FDX-ACB domain occupies 612–705 (SVYPKIVKDL…LELKVQAILR (94 aa)).

It belongs to the phenylalanyl-tRNA synthetase beta subunit family. Type 1 subfamily. In terms of assembly, tetramer of two alpha and two beta subunits. It depends on Mg(2+) as a cofactor.

It localises to the plastid. The protein localises to the chloroplast. The enzyme catalyses tRNA(Phe) + L-phenylalanine + ATP = L-phenylalanyl-tRNA(Phe) + AMP + diphosphate + H(+). This is Phenylalanine--tRNA ligase beta subunit, chloroplastic from Phaeodactylum tricornutum (strain CCAP 1055/1).